Here is a 133-residue protein sequence, read N- to C-terminus: MASRKATVQSIVESFNERDIDKMTAPVSKNFVYQLLPKSLERGPMDVAGFRGLFEATKSYFNNFKFEVVDTFEDSAADKMILWANVTSDTHVGKFATEVMLIFYFDTTGKIYKWIEWIDSAVGKEFEQKLQGQ.

It participates in mycotoxin biosynthesis. Part of the core atranone cluster (CAC) which products are predicted to catalyze most or all steps of mycotoxin atranone synthesis, starting from geranylgeranyl pyrophosphate (GGPP). The initial cyclization of GGPP to dolabellane is probably performed by the terpene cyclase ATR13. The Baeyer-Villiger oxidation near the end of the atranone synthesis, which converts atranones D and E to atranones F and G is predicted to be catalyzed by the monooxygenase ATR8. Of the CAC's other predicted gene products, the reducing PKS ATR6 might synthesize a polyketide chain. This polyketide is probably transferred onto the atranone backbone by the polyketide transferase ATR5. Other predicted CAC products include 4 oxygenases (ATR2, ATR3, ATR4, and ATR14), 3 short-chain reductases (ATR7, ATR9, and ATR10), and a methyltransferase (ATR12). These may all be involved in the various steps of atranone biosynthesis, although their specific roles must await experimental determination. The chain is Core atranone cluster (CAC) protein 11 from Stachybotrys chlorohalonatus (strain IBT 40285).